Here is an 89-residue protein sequence, read N- to C-terminus: Co-chaperonin GroES (89 aa).

Belongs to the GroES chaperonin family. In terms of assembly, heptamer of 7 subunits arranged in a ring. Interacts with the chaperonin GroEL.

It localises to the cytoplasm. Its function is as follows. Together with the chaperonin GroEL, plays an essential role in assisting protein folding. The GroEL-GroES system forms a nano-cage that allows encapsulation of the non-native substrate proteins and provides a physical environment optimized to promote and accelerate protein folding. GroES binds to the apical surface of the GroEL ring, thereby capping the opening of the GroEL channel. The chain is Co-chaperonin GroES from Fervidobacterium nodosum (strain ATCC 35602 / DSM 5306 / Rt17-B1).